The primary structure comprises 370 residues: Cyclic AMP-responsive element-binding protein 3-like protein 4 (370 aa).

The interval 1 to 55 (MELGCPELLEPPEDIFSTGSFLELGFNGPASKVPVTRGLQKSEPDDFLNLFIDPN) is required for transcriptional activation. Residues 1-271 (MELGCPELLE…QTSSRAAQTS (271 aa)) lie on the Cytoplasmic side of the membrane. The tract at residues 61–85 (ETSPGRDSGVSEDPGSPAQQASSSP) is disordered. The segment covering 76 to 85 (SPAQQASSSP) has biased composition (low complexity). The bZIP domain maps to 193–256 (ILKKIRRKIR…IFLMEQVRQL (64 aa)). The interval 195-234 (KKIRRKIRNKQSAQDSRRRKKEYLDGLESRVAACSEQNQK) is basic motif. A leucine-zipper region spans residues 235-256 (LQRKVQELERQNIFLMEQVRQL). The helical; Signal-anchor for type II membrane protein transmembrane segment at 272-292 (TCVLILLFSLALIILPSFSPF) threads the bilayer. Topologically, residues 293–370 (QGQSEARPED…IRGMVHTDEM (78 aa)) are lumenal. N318 and N342 each carry an N-linked (GlcNAc...) asparagine glycan.

It belongs to the bZIP family. ATF subfamily. Binds DNA as a dimer. Forms a heterodimer with CREM isoform Tau. Post-translationally, controlled by regulated intramembrane proteolysis (RIP). Following ER stress a fragment containing the cytoplasmic transcription factor domain is released by proteolysis. The cleavage seems to be performed sequentially by site-1 and site-2 proteases (PS1 and PS2). PS1 cleavage may be suppressed by a determinant in the C-terminal region. In terms of tissue distribution, predominantly expressed at high levels in testis with isoform 2 being the predominant isoform. Specifically expressed in postmeiotic spermatids and accumulates in the mid/late stage (at protein level). Ubiquitously expressed at low levels.

It localises to the endoplasmic reticulum membrane. Its subcellular location is the cytoplasmic vesicle. The protein localises to the secretory vesicle. It is found in the acrosome inner membrane. The protein resides in the nucleus. Its function is as follows. Transcriptional activator that may play a role in the unfolded protein response of the testis. Proposed to be involved in spermiogenesis. May be involved in regulating the maturation of sperm head nuclei. Alternatively proposed to be a paternally delivered transcription factor that may function in early zygotic gene activation. Increases the binding of CREM isoform Tau with CRE. The CREM isoform Tau-CREB3L4 heterodimer functions through CRE but not through UPRE and may recruit HIRA to CRE to regulate histone exchange. This Mus musculus (Mouse) protein is Cyclic AMP-responsive element-binding protein 3-like protein 4 (Creb3l4).